The following is a 922-amino-acid chain: Disintegrin and metalloproteinase domain-containing protein 10 homolog (922 aa).

The signal sequence occupies residues 1 to 26 (MSSPIRNRLQLVVTLIFCLFFENVNG). Positions 27 to 228 (LNNFIDNFET…YMTMGGRSKR (202 aa)) are excised as a propeptide. Residues asparagine 74, asparagine 185, and asparagine 346 are each glycosylated (N-linked (GlcNAc...) asparagine). Topologically, residues 229-745 (ANTLRDHDGL…ETLTQWAQDN (517 aa)) are extracellular. A Peptidase M12B domain is found at 242–480 (RTCSLYMQAD…CSVKNISAVL (239 aa)). Residue histidine 426 participates in Zn(2+) binding. The active site involves glutamate 427. 2 residues coordinate Zn(2+): histidine 430 and histidine 436. Cysteine 442 and cysteine 471 are joined by a disulfide. Asparagine 475 carries an N-linked (GlcNAc...) asparagine glycan. In terms of domain architecture, Disintegrin spans 511–615 (SAFCGNQIYE…QCPVSPPKHD (105 aa)). 5 cysteine pairs are disulfide-bonded: cysteine 542–cysteine 577, cysteine 564–cysteine 572, cysteine 588–cysteine 607, cysteine 594–cysteine 626, and cysteine 619–cysteine 631. Residue asparagine 632 is glycosylated (N-linked (GlcNAc...) asparagine). Disulfide bonds link cysteine 636-cysteine 659, cysteine 644-cysteine 665, cysteine 655-cysteine 707, and cysteine 700-cysteine 713. Asparagine 677 carries an N-linked (GlcNAc...) asparagine glycan. The helical transmembrane segment at 746–766 (WWVVGVGGLVFLVIMALFVKC) threads the bilayer. At 767–922 (CAVHTPSTNP…SGNGGKKKGK (156 aa)) the chain is on the cytoplasmic side. Disordered regions lie at residues 797 to 837 (QHRQ…PSAP) and 864 to 922 (PGSS…KKGK). The span at 805-834 (AAGSVPPGPGAQPRSGAASAPSRTTPSARP) shows a compositional bias: low complexity.

May interact with tetraspanin tsp-12; the interaction promotes sup-17 cell membrane localization. It depends on Zn(2+) as a cofactor. Expressed in the germline.

The protein resides in the cell membrane. Its subcellular location is the basolateral cell membrane. It is found in the cytoplasmic vesicle membrane. It catalyses the reaction Endopeptidase of broad specificity.. In terms of biological role, metalloprotease. Acts together with protease adm-4 and in a cell autonomous manner to facilitate lin-12/Notch signaling during developmental cell fate decision, including anchor cell/ventral uterine precursor cell decision and vulva precursor cell specification. By modulating glp-1/Notch signaling, plays a role in germline development. Probably by modulating BMP-like Sma/Mab signaling via the shedding of unc-40 ectodomain, involved in the regulation of body size and mesoderm development. Probably by shedding ephrin efn-4, regulates axon guidance of SDQL neuron during development. This Caenorhabditis elegans protein is Disintegrin and metalloproteinase domain-containing protein 10 homolog.